A 323-amino-acid chain; its full sequence is Aldo-keto reductase family 1 member C18 (323 aa).

NADP(+) contacts are provided by residues 20–24 (GFGTY) and aspartate 50. The Proton donor role is filled by tyrosine 55. Position 117 (histidine 117) interacts with substrate. NADP(+) is bound by residues 166-167 (SN), glutamine 190, 216-221 (YGALGT), and 270-280 (KSFNEERIREN).

The protein belongs to the aldo/keto reductase family. In terms of assembly, monomer. In terms of processing, the N-terminus is blocked. Corpus luteum (large luteal cells).

The protein resides in the cytoplasm. The catalysed reaction is (17R,20S)-17,20-dihydroxypregn-4-en-3-one + NADP(+) = 17alpha-hydroxyprogesterone + NADPH + H(+). It catalyses the reaction (17R,20S)-17,20-dihydroxypregn-4-en-3-one + NAD(+) = 17alpha-hydroxyprogesterone + NADH + H(+). Functionally, catalyzes the conversion of progesterone into 20-alpha-dihydroprogesterone (20 alpha-OHP). The protein is Aldo-keto reductase family 1 member C18 (Akr1c18) of Rattus norvegicus (Rat).